An 83-amino-acid polypeptide reads, in one-letter code: UPF0297 protein CKR_1221 (83 aa).

Belongs to the UPF0297 family.

In Clostridium kluyveri (strain NBRC 12016), this protein is UPF0297 protein CKR_1221.